The sequence spans 106 residues: Small ribosomal subunit protein uS10 (106 aa).

The protein belongs to the universal ribosomal protein uS10 family. In terms of assembly, part of the 30S ribosomal subunit.

In terms of biological role, involved in the binding of tRNA to the ribosomes. In Mesomycoplasma hyopneumoniae (strain 232) (Mycoplasma hyopneumoniae), this protein is Small ribosomal subunit protein uS10.